Consider the following 66-residue polypeptide: Photosystem II reaction center protein J (66 aa).

The chain crosses the membrane as a helical span at residues 37–57; sequence LWLVATAGGMAVIFVVGLFFY.

It belongs to the PsbJ family. As to quaternary structure, PSII is composed of 1 copy each of membrane proteins PsbA, PsbB, PsbC, PsbD, PsbE, PsbF, PsbH, PsbI, PsbJ, PsbK, PsbL, PsbM, PsbT, PsbX, PsbY, PsbZ, Psb30/Ycf12, peripheral proteins PsbO, CyanoQ (PsbQ), PsbU, PsbV and a large number of cofactors. It forms dimeric complexes.

It is found in the cellular thylakoid membrane. Functionally, one of the components of the core complex of photosystem II (PSII). PSII is a light-driven water:plastoquinone oxidoreductase that uses light energy to abstract electrons from H(2)O, generating O(2) and a proton gradient subsequently used for ATP formation. It consists of a core antenna complex that captures photons, and an electron transfer chain that converts photonic excitation into a charge separation. This Synechococcus sp. (strain CC9311) protein is Photosystem II reaction center protein J.